We begin with the raw amino-acid sequence, 155 residues long: Deoxyuridine 5'-triphosphate nucleotidohydrolase (155 aa).

Substrate is bound by residues 74–76 (RSG), asparagine 87, and 91–93 (TID).

The protein belongs to the dUTPase family. The cofactor is Mg(2+).

It carries out the reaction dUTP + H2O = dUMP + diphosphate + H(+). It participates in pyrimidine metabolism; dUMP biosynthesis; dUMP from dCTP (dUTP route): step 2/2. This enzyme is involved in nucleotide metabolism: it produces dUMP, the immediate precursor of thymidine nucleotides and it decreases the intracellular concentration of dUTP so that uracil cannot be incorporated into DNA. The chain is Deoxyuridine 5'-triphosphate nucleotidohydrolase from Cereibacter sphaeroides (strain ATCC 17023 / DSM 158 / JCM 6121 / CCUG 31486 / LMG 2827 / NBRC 12203 / NCIMB 8253 / ATH 2.4.1.) (Rhodobacter sphaeroides).